The following is a 261-amino-acid chain: Thiazole synthase (261 aa).

Lysine 95 functions as the Schiff-base intermediate with DXP in the catalytic mechanism. 1-deoxy-D-xylulose 5-phosphate is bound by residues glycine 156, 182–183, and 204–205; these read AG and NT.

The protein belongs to the ThiG family. Homotetramer. Forms heterodimers with either ThiH or ThiS.

It is found in the cytoplasm. The catalysed reaction is [ThiS sulfur-carrier protein]-C-terminal-Gly-aminoethanethioate + 2-iminoacetate + 1-deoxy-D-xylulose 5-phosphate = [ThiS sulfur-carrier protein]-C-terminal Gly-Gly + 2-[(2R,5Z)-2-carboxy-4-methylthiazol-5(2H)-ylidene]ethyl phosphate + 2 H2O + H(+). It functions in the pathway cofactor biosynthesis; thiamine diphosphate biosynthesis. Functionally, catalyzes the rearrangement of 1-deoxy-D-xylulose 5-phosphate (DXP) to produce the thiazole phosphate moiety of thiamine. Sulfur is provided by the thiocarboxylate moiety of the carrier protein ThiS. In vitro, sulfur can be provided by H(2)S. The sequence is that of Thiazole synthase from Pectobacterium carotovorum subsp. carotovorum (strain PC1).